The sequence spans 103 residues: Large ribosomal subunit protein uL24 (103 aa).

It belongs to the universal ribosomal protein uL24 family. Part of the 50S ribosomal subunit.

One of two assembly initiator proteins, it binds directly to the 5'-end of the 23S rRNA, where it nucleates assembly of the 50S subunit. Functionally, one of the proteins that surrounds the polypeptide exit tunnel on the outside of the subunit. The protein is Large ribosomal subunit protein uL24 of Haemophilus influenzae (strain PittEE).